The chain runs to 365 residues: Phosphatidylcholine:ceramide cholinephosphotransferase 4 (365 aa).

The Cytoplasmic portion of the chain corresponds to Met1–Gln44. The helical transmembrane segment at Val45–Ile65 threads the bilayer. The Lumenal segment spans residues Thr66–Gly92. The helical transmembrane segment at Met93 to Phe113 threads the bilayer. Topologically, residues Lys114 to Arg165 are cytoplasmic. A helical transmembrane segment spans residues Phe166–Leu186. Residues Pro187 to Thr229 are Lumenal-facing. His228 is a catalytic residue. A helical transmembrane segment spans residues Val230–Phe250. A topological domain (cytoplasmic) is located at residue Arg251. A helical transmembrane segment spans residues Pro252–Tyr272. Active-site residues include His271 and Asp275. The Lumenal portion of the chain corresponds to Thr273–Asp275. The helical transmembrane segment at Val276–Gly296 threads the bilayer. The Cytoplasmic segment spans residues Ala297–Val365.

Belongs to the sphingomyelin synthase family.

Its subcellular location is the golgi apparatus membrane. The enzyme catalyses an N-acylsphing-4-enine + a 1,2-diacyl-sn-glycero-3-phosphocholine = a sphingomyelin + a 1,2-diacyl-sn-glycerol. In terms of biological role, bidirectional lipid cholinephosphotransferase capable of converting phosphatidylcholine (PC) and ceramide to sphingomyelin (SM) and diacylglycerol (DAG) and vice versa. Direction is dependent on the relative concentrations of DAG and ceramide as phosphocholine acceptors. Directly and specifically recognizes the choline head group on the substrate. Also requires two fatty chains on the choline-P donor molecule in order to be recognized efficiently as a substrate. Does not function strictly as a SM synthase. Essential for viability of the pathogenic bloodstream stage of this human protozoan parasite and, consequently, can be considered as potential drug target. The sequence is that of Phosphatidylcholine:ceramide cholinephosphotransferase 4 from Trypanosoma brucei brucei (strain 927/4 GUTat10.1).